A 395-amino-acid polypeptide reads, in one-letter code: Forkhead box protein I3 (395 aa).

A DNA-binding region (fork-head) is located at residues R131 to K225. 2 disordered regions span residues D216–S288 and R322–S370. Positions R221–R227 match the Nuclear localization signal motif. A compositionally biased stretch (low complexity) spans A234–L245. Residues S325 to T335 show a composition bias toward polar residues. Low complexity predominate over residues P336 to Q349.

Initially expressed in the pre-placodal ectoderm surrounding the neural plate, which will give rise to all craniofacial sensory organs. Expression then becomes restricted to a region immediately anterior to the first pair of somites that will give rise to the otic and epibranchial placodes, before becoming down-regulated from this region and restricted to the ectoderm and endoderm of the pharyngeal arches.

The protein resides in the nucleus. In terms of biological role, transcription factor required for pharyngeal arch development, which is involved in otic placode development. The polypeptide is Forkhead box protein I3 (Gallus gallus (Chicken)).